Here is a 243-residue protein sequence, read N- to C-terminus: Urease accessory protein UreF 2 (243 aa).

Belongs to the UreF family. In terms of assembly, ureD, UreF and UreG form a complex that acts as a GTP-hydrolysis-dependent molecular chaperone, activating the urease apoprotein by helping to assemble the nickel containing metallocenter of UreC. The UreE protein probably delivers the nickel.

The protein resides in the cytoplasm. In terms of biological role, required for maturation of urease via the functional incorporation of the urease nickel metallocenter. Disrupting the ure2 operon has no effect on urease activity or pathogen survival in BALB/c mice when administered orally. This chain is Urease accessory protein UreF 2, found in Brucella abortus (strain 2308).